A 153-amino-acid polypeptide reads, in one-letter code: Ribosome-binding factor A (153 aa).

Residues 116-153 (DAQVAEQAQGAQYAAGEDAYRTPSDEDDAEGPESAPRV) are disordered. Residues 119-132 (VAEQAQGAQYAAGE) are compositionally biased toward low complexity.

The protein belongs to the RbfA family. In terms of assembly, monomer. Binds 30S ribosomal subunits, but not 50S ribosomal subunits or 70S ribosomes.

It localises to the cytoplasm. One of several proteins that assist in the late maturation steps of the functional core of the 30S ribosomal subunit. Associates with free 30S ribosomal subunits (but not with 30S subunits that are part of 70S ribosomes or polysomes). Required for efficient processing of 16S rRNA. May interact with the 5'-terminal helix region of 16S rRNA. The protein is Ribosome-binding factor A of Kocuria rhizophila (strain ATCC 9341 / DSM 348 / NBRC 103217 / DC2201).